A 338-amino-acid polypeptide reads, in one-letter code: Taste receptor type 2 member 39 (338 aa).

Over 1-30 (MLGRCFPPDTKEKQQLRMTKLCDPAESELS) the chain is Extracellular. The helical transmembrane segment at 31-51 (PFLITLILAVLLAEYLIGIIA) threads the bilayer. At 52–74 (NGFIMAIHAAEWVQNKAVSTSGR) the chain is on the cytoplasmic side. A helical transmembrane segment spans residues 75–95 (ILVFLSVSRIALQSLMMLEIT). Over 96–116 (ISSTSLSFYSEDAVYYAFKIS) the chain is Extracellular. The chain crosses the membrane as a helical span at residues 117 to 137 (FIFLNFCSLWFAAWLSFFYFV). Topologically, residues 138 to 156 (KIANFSYPLFLKLRWRITG) are cytoplasmic. Residues 157–177 (LIPWLLWLSVFISFSHSMFCI) form a helical membrane-spanning segment. Over 178-205 (NICTVYCNNSFPIHSSNSTKKTYLSEIN) the chain is Extracellular. N-linked (GlcNAc...) asparagine glycosylation is found at Asn185 and Asn194. Residues 206–226 (VVGLAFFFNLGIVTPLIMFIL) form a helical membrane-spanning segment. Residues 227-262 (TATLLILSLKRHTLHMGSNATGSNDPSMEAHMGAIK) lie on the Cytoplasmic side of the membrane. The chain crosses the membrane as a helical span at residues 263–283 (AISYFLILYIFNAVALFIYLS). The Extracellular portion of the chain corresponds to 284–291 (NMFDINSL). Residues 292–312 (WNNLCQIIMAAYPAGHSILPI) traverse the membrane as a helical segment. The Cytoplasmic portion of the chain corresponds to 313–338 (QDNPGLRRAWKRLQLRLHLYPKEWTL).

It belongs to the G-protein coupled receptor T2R family.

The protein resides in the membrane. In terms of biological role, receptor that may play a role in the perception of bitterness and is gustducin-linked. May play a role in sensing the chemical composition of the gastrointestinal content. The activity of this receptor may stimulate alpha gustducin, mediate PLC-beta-2 activation and lead to the gating of TRPM5. The chain is Taste receptor type 2 member 39 (TAS2R39) from Pan paniscus (Pygmy chimpanzee).